Consider the following 143-residue polypeptide: Large-conductance mechanosensitive channel (143 aa).

Transmembrane regions (helical) follow at residues 10-30 and 89-109; these read FAVKGNVMDLAIGVIIGGAFS and GSFITVLINFIILAFIIFLMV.

It belongs to the MscL family. As to quaternary structure, homopentamer.

It localises to the cell inner membrane. Functionally, channel that opens in response to stretch forces in the membrane lipid bilayer. May participate in the regulation of osmotic pressure changes within the cell. This chain is Large-conductance mechanosensitive channel, found in Burkholderia pseudomallei (strain 668).